The following is a 61-amino-acid chain: DNA-directed RNA polymerase subunit Rpo6 (61 aa).

It belongs to the archaeal Rpo6/eukaryotic RPB6 RNA polymerase subunit family. Part of the RNA polymerase complex.

The protein localises to the cytoplasm. It catalyses the reaction RNA(n) + a ribonucleoside 5'-triphosphate = RNA(n+1) + diphosphate. Functionally, DNA-dependent RNA polymerase (RNAP) catalyzes the transcription of DNA into RNA using the four ribonucleoside triphosphates as substrates. The protein is DNA-directed RNA polymerase subunit Rpo6 of Methanothermobacter thermautotrophicus (strain ATCC 29096 / DSM 1053 / JCM 10044 / NBRC 100330 / Delta H) (Methanobacterium thermoautotrophicum).